The following is a 106-amino-acid chain: Aspartyl/glutamyl-tRNA(Asn/Gln) amidotransferase subunit C (106 aa).

The protein belongs to the GatC family. Heterotrimer of A, B and C subunits.

The enzyme catalyses L-glutamyl-tRNA(Gln) + L-glutamine + ATP + H2O = L-glutaminyl-tRNA(Gln) + L-glutamate + ADP + phosphate + H(+). It catalyses the reaction L-aspartyl-tRNA(Asn) + L-glutamine + ATP + H2O = L-asparaginyl-tRNA(Asn) + L-glutamate + ADP + phosphate + 2 H(+). In terms of biological role, allows the formation of correctly charged Asn-tRNA(Asn) or Gln-tRNA(Gln) through the transamidation of misacylated Asp-tRNA(Asn) or Glu-tRNA(Gln) in organisms which lack either or both of asparaginyl-tRNA or glutaminyl-tRNA synthetases. The reaction takes place in the presence of glutamine and ATP through an activated phospho-Asp-tRNA(Asn) or phospho-Glu-tRNA(Gln). The protein is Aspartyl/glutamyl-tRNA(Asn/Gln) amidotransferase subunit C of Lactiplantibacillus plantarum (strain ATCC BAA-793 / NCIMB 8826 / WCFS1) (Lactobacillus plantarum).